The sequence spans 198 residues: Na(+)-translocating NADH-quinone reductase subunit E (198 aa).

Helical transmembrane passes span 11–31 (AVFI…FLAV), 35–55 (VTTA…SVPA), 77–97 (FLNF…LEMI), 109–129 (LGIF…VSFM), 140–160 (IVYG…LASI), and 176–196 (LGIT…FSGV).

The protein belongs to the NqrDE/RnfAE family. In terms of assembly, composed of six subunits; NqrA, NqrB, NqrC, NqrD, NqrE and NqrF.

The protein resides in the cell inner membrane. It carries out the reaction a ubiquinone + n Na(+)(in) + NADH + H(+) = a ubiquinol + n Na(+)(out) + NAD(+). Functionally, NQR complex catalyzes the reduction of ubiquinone-1 to ubiquinol by two successive reactions, coupled with the transport of Na(+) ions from the cytoplasm to the periplasm. NqrA to NqrE are probably involved in the second step, the conversion of ubisemiquinone to ubiquinol. This chain is Na(+)-translocating NADH-quinone reductase subunit E, found in Photorhabdus laumondii subsp. laumondii (strain DSM 15139 / CIP 105565 / TT01) (Photorhabdus luminescens subsp. laumondii).